A 139-amino-acid polypeptide reads, in one-letter code: Gonadotropin subunit beta-2 (139 aa).

Residues 1–24 form the signal peptide; sequence MFPLVLSLFLGATSDIWPLAPAEA. Intrachain disulfides connect Cys30-Cys78, Cys44-Cys93, Cys47-Cys131, Cys55-Cys109, Cys59-Cys111, and Cys114-Cys121. N-linked (GlcNAc...) asparagine glycosylation is present at Asn34.

It belongs to the glycoprotein hormones subunit beta family. In terms of assembly, heterodimer of an alpha and a beta chain.

The protein resides in the secreted. In terms of biological role, involved in gametogenesis and steroidogenesis. This is Gonadotropin subunit beta-2 (cgbb) from Morone saxatilis (Striped bass).